Here is a 295-residue protein sequence, read N- to C-terminus: Small ribosomal subunit protein uS2 (295 aa).

The tract at residues 261 to 295 is disordered; the sequence is QAKKFSKTKNIDEETNTEFEQVLNDADENKNSDNA.

It belongs to the universal ribosomal protein uS2 family.

This is Small ribosomal subunit protein uS2 from Rickettsia rickettsii (strain Sheila Smith).